The primary structure comprises 408 residues: Photox toxin (408 aa).

The disordered stretch occupies residues 168–196; sequence NNQQHIKDSDGRKPVNNMPPPPPPPMADK. A compositionally biased stretch (pro residues) spans 184 to 193; the sequence is NMPPPPPPPM. The TR mART core domain maps to 190–393; the sequence is PPPMADKTQK…LRLTDDASAD (204 aa). Catalysis depends on residues R288, S318, and E355.

The protein in the C-terminal section; belongs to the SpvB family.

The catalysed reaction is L-arginyl-[protein] + NAD(+) = N(omega)-(ADP-D-ribosyl)-L-arginyl-[protein] + nicotinamide + H(+). Functionally, mono-ADP-ribosylates chicken skeletal alpha-actin and human non-skeletal beta- and gamma-actin. Mono-ADP-ribosylates 'Arg-177' of yeast actin, blocking its ability to polymerize. Does not possess NAD(+)-glycohydrolase activity, unlike most mART enzymes. Upon expression in S.cerevisiae almost completely inhibits growth. The polypeptide is Photox toxin (phxA) (Photorhabdus laumondii subsp. laumondii (strain DSM 15139 / CIP 105565 / TT01) (Photorhabdus luminescens subsp. laumondii)).